Here is a 129-residue protein sequence, read N- to C-terminus: Glycine cleavage system H protein (129 aa).

Residues 24–106 (SYTVGITEHA…YGEGWFFRVM (83 aa)) form the Lipoyl-binding domain. Lys65 is modified (N6-lipoyllysine).

This sequence belongs to the GcvH family. The glycine cleavage system is composed of four proteins: P, T, L and H. The cofactor is (R)-lipoate.

Its function is as follows. The glycine cleavage system catalyzes the degradation of glycine. The H protein shuttles the methylamine group of glycine from the P protein to the T protein. The chain is Glycine cleavage system H protein from Shewanella oneidensis (strain ATCC 700550 / JCM 31522 / CIP 106686 / LMG 19005 / NCIMB 14063 / MR-1).